Here is a 162-residue protein sequence, read N- to C-terminus: Onchocystatin (162 aa).

The signal sequence occupies residues 1 to 32 (MLTIKDGTLLIHLLLFSVVALVQLQGAKSARA). The interval 30-54 (ARAKNPSKMESKTGENQDRPVLLGG) is disordered. The span at 36-47 (SKMESKTGENQD) shows a compositional bias: basic and acidic residues. The Secondary area of contact motif lies at 97-101 (QVVAG). A disulfide bridge links Cys-115 with Cys-128.

The protein belongs to the cystatin family. As to expression, expressed in the cuticle of L3 and L4 larvae, female adult, and in the eggshell of developing microfilariae.

Its function is as follows. Cysteine protease inhibitor which inhibits members of the peptidase C1 family. In the human host, inhibits CTSL/cathepsin L and CTSS/cathepsin S and to a lesser extent CTSB/cathepsin B which may cause defects in antigen processing and thereby impair antigen-driven T cell proliferation. In Onchocerca volvulus, this protein is Onchocystatin.